A 499-amino-acid chain; its full sequence is Potassium voltage-gated channel subfamily A member 2 (499 aa).

Residues 1–26 are disordered; that stretch reads MTVATGDPVDEAAALPGHPQDTYDPE. The segment at 1 to 125 is tetramerization domain; it reads MTVATGDPVD…YELGEEAMEM (125 aa). Over 1 to 160 the chain is Cytoplasmic; sequence MTVATGDPVD…LLFEYPESSG (160 aa). A helical membrane pass occupies residues 161 to 182; the sequence is PARIIAIVSVMVILISIVSFCL. The Extracellular portion of the chain corresponds to 183 to 221; it reads ETLPIFRDENEDMHGGGVTFHTYSNSTIGYQQSTSFTDP. An N-linked (GlcNAc...) asparagine glycan is attached at Asn-207. The helical transmembrane segment at 222 to 243 threads the bilayer; that stretch reads FFIVETLCIIWFSFEFLVRFFA. Cys-244 carries the S-palmitoyl cysteine lipid modification. Residues 244–254 lie on the Cytoplasmic side of the membrane; sequence CPSKAGFFTNI. The helical transmembrane segment at 255–275 threads the bilayer; sequence MNIIDIVAIIPYFITLGTELA. Residues 276–289 lie on the Extracellular side of the membrane; the sequence is EKPEDAQQGQQAMS. The chain crosses the membrane as a helical; Voltage-sensor span at residues 290–310; it reads LAILRVIRLVRVFRIFKLSRH. Topologically, residues 311–325 are cytoplasmic; it reads SKGLQILGQTLKASM. The S4-S5 linker stretch occupies residues 312–325; sequence KGLQILGQTLKASM. A helical membrane pass occupies residues 326-347; sequence RELGLLIFFLFIGVILFSSAVY. Residues 348 to 361 lie on the Extracellular side of the membrane; sequence FAEADERDSQFPSI. The helical intramembrane region spans 362 to 373; that stretch reads PDAFWWAVVSMT. The short motif at 374-379 is the Selectivity filter element; that stretch reads TVGYGD. The stretch at 374–381 is an intramembrane region; it reads TVGYGDMV. Residues 382–388 lie on the Extracellular side of the membrane; the sequence is PTTIGGK. Residues 389-417 traverse the membrane as a helical segment; sequence IVGSLCAIAGVLTIALPVPVIVSNFNYFY. Over 418–499 the chain is Cytoplasmic; it reads HRETEGEEQA…VNITKMLTDV (82 aa). The residue at position 429 (Tyr-429) is a Phosphotyrosine. A phosphoserine mark is found at Ser-434, Ser-440, Ser-441, and Ser-449. Residue Tyr-458 is modified to Phosphotyrosine. Ser-468 carries the post-translational modification Phosphoserine. The PDZ-binding motif lies at 497–499; that stretch reads TDV.

The protein belongs to the potassium channel family. A (Shaker) (TC 1.A.1.2) subfamily. Kv1.2/KCNA2 sub-subfamily. In terms of assembly, homotetramer and heterotetramer with other channel-forming alpha subunits, such as KCNA1, KCNA4, KCNA5, KCNA6 and KCNA7. Channel activity is regulated by interaction with beta subunits, including KCNAB1 and KCNAB2. Identified in a complex with KCNA1 and KCNAB2. Identified in a complex with KCNA5 and KCNAB1. Identified in a complex with KCNA4 and FYN. Interacts with PTK2B. Interacts (via C-terminus) with CTTN. Interacts with ADAM22. Interacts with CNTNAP2. Interacts (via C-terminus) with the PDZ domains of DLG1, DLG2 and DLG4. Interacts (via N-terminal cytoplasmic domain) with RHOA (GTP-bound form); this regulates channel activity by reducing location at the cell surface in response to CHRM1 activation. Interacts with DRD2. Interacts with SIGMAR1; cocaine consumption leads to increased interaction. Interacts with ADAM11. Interacts with LYNX1. Post-translationally, phosphorylated on tyrosine residues; phosphorylation increases in response to ischemia. Phosphorylated on tyrosine residues by activated PTK2B/PYK2. Phosphorylation on tyrosine residues suppresses ion channel activity. Phosphorylated on tyrosine residues in response to CHRM1 activation; this abolishes interaction with CTTN. This is probably due to endocytosis of the phosphorylated channel subunits. Phosphorylated on serine residues in response to increased cAMP levels; phosphorylation is apparently not catalyzed by PKA. N-glycosylated, with complex, sialylated N-glycans. Detected in brain. Detected in cerebellum. Detected in mitral cells in the olfactory bulb. Detected in cochlea. Detected in cerebellum, particularly in the basket cell axon plexus and in the terminal regions around Purkinje cells (at protein level). Detected in juxtaparanodal regions in sciatic nerve. Detected in Schwann cells from sciatic nerve. Detected in dopamine neurons in substantia nigra. Detected in large myelinated fibers in juxtaparanodes in the CA3 and CA1 areas of the hippocampus. Detected in brain, in punctae on fiber tracts in brain stem and spinal cord, and on axons in the juxtaparanodal regions of the node of Ranvier (at protein level). Detected in dopamine neurons in the midbrain.

The protein localises to the cell membrane. The protein resides in the membrane. It is found in the cell projection. Its subcellular location is the axon. It localises to the synapse. The protein localises to the endoplasmic reticulum membrane. The protein resides in the lamellipodium membrane. It is found in the synaptosome. Its subcellular location is the presynaptic cell membrane. It localises to the dendrite. The protein localises to the perikaryon. The protein resides in the cell junction. It is found in the paranodal septate junction. It catalyses the reaction K(+)(in) = K(+)(out). Inhibited by 4-aminopyridine (4-AP), dendrotoxin (DTX) and charybdotoxin (CTX), but not by tetraethylammonium (TEA). Inhibited by tityustoxin-K alpha (TsTX-Kalpha), a toxin that is highly specific for KCNA2. Inhibited by maurotoxin. Inhibited by kappaM conotoxins kappaM-RIIIJ and kappaM-RIIIK. In terms of biological role, voltage-gated potassium channel that mediates transmembrane potassium transport in excitable membranes, primarily in the brain and the central nervous system, but also in the cardiovascular system. Prevents aberrant action potential firing and regulates neuronal output. Forms tetrameric potassium-selective channels through which potassium ions pass in accordance with their electrochemical gradient. The channel alternates between opened and closed conformations in response to the voltage difference across the membrane. Can form functional homotetrameric channels and heterotetrameric channels that contain variable proportions of KCNA1, KCNA2, KCNA4, KCNA5, KCNA6, KCNA7, and possibly other family members as well; channel properties depend on the type of alpha subunits that are part of the channel. Channel properties are modulated by cytoplasmic beta subunits that regulate the subcellular location of the alpha subunits and promote rapid inactivation of delayed rectifier potassium channels. In vivo, membranes probably contain a mixture of heteromeric potassium channel complexes, making it difficult to assign currents observed in intact tissues to any particular potassium channel family member. Homotetrameric KCNA2 forms a delayed-rectifier potassium channel that opens in response to membrane depolarization, followed by slow spontaneous channel closure. In contrast, a heteromultimer formed by KCNA2 and KCNA4 shows rapid inactivation. Contributes to the regulation of action potentials in neurons. KCNA2-containing channels play a presynaptic role and prevent hyperexcitability and aberrant action potential firing. Response to toxins that are selective for KCNA1, respectively for KCNA2, suggests that heteromeric potassium channels composed of both KCNA1 and KCNA2 play a role in pacemaking and regulate the output of deep cerebellar nuclear neurons. Response to toxins that are selective for KCNA2-containing potassium channels suggests that in Purkinje cells, dendritic subthreshold KCNA2-containing potassium channels prevent random spontaneous calcium spikes, suppressing dendritic hyperexcitability without hindering the generation of somatic action potentials, and thereby play an important role in motor coordination. KCNA2-containing channels play a role in GABAergic transmission from basket cells to Purkinje cells in the cerebellum, and thereby play an import role in motor coordination. Plays a role in the induction of long-term potentiation of neuron excitability in the CA3 layer of the hippocampus. May function as down-stream effector for G protein-coupled receptors and inhibit GABAergic inputs to basolateral amygdala neurons. May contribute to the regulation of neurotransmitter release, such as gamma-aminobutyric acid (GABA). Contributes to the regulation of the axonal release of the neurotransmitter dopamine. Reduced KCNA2 expression plays a role in the perception of neuropathic pain after peripheral nerve injury, but not acute pain. Plays a role in the regulation of the time spent in non-rapid eye movement (NREM) sleep. This is Potassium voltage-gated channel subfamily A member 2 (Kcna2) from Mus musculus (Mouse).